A 108-amino-acid chain; its full sequence is Replication initiation control protein YabA (108 aa).

Zn(2+) contacts are provided by H83, C85, C99, and C102.

This sequence belongs to the YabA family. In terms of assembly, homotetramer. Interacts with both DnaA and DnaN, acting as a bridge between these two proteins. It depends on Zn(2+) as a cofactor.

The protein localises to the cytoplasm. Its subcellular location is the nucleoid. In terms of biological role, involved in control of chromosome replication initiation. Inhibits the cooperative binding of DnaA to the oriC region, thus negatively regulating initiation of chromosome replication. Inhibits the ability of DnaA-ATP to form a helix on DNA; does not disassemble preformed DnaA-DNA helices. Decreases the residence time of DnaA on the chromosome at its binding sites (oriC, replication forks and promoter-binding sites). Tethers DnaA to the replication machinery via the DNA polymerase beta sliding clamp subunit (dnaN). Associates with oriC and other DnaA targets on the chromosome in a DnaA-dependent manner. The polypeptide is Replication initiation control protein YabA (Lactococcus lactis subsp. cremoris (strain SK11)).